The following is a 325-amino-acid chain: Phosphate acyltransferase (325 aa).

It belongs to the PlsX family. Homodimer. Probably interacts with PlsY.

It localises to the cytoplasm. It catalyses the reaction a fatty acyl-[ACP] + phosphate = an acyl phosphate + holo-[ACP]. It functions in the pathway lipid metabolism; phospholipid metabolism. Its function is as follows. Catalyzes the reversible formation of acyl-phosphate (acyl-PO(4)) from acyl-[acyl-carrier-protein] (acyl-ACP). This enzyme utilizes acyl-ACP as fatty acyl donor, but not acyl-CoA. This chain is Phosphate acyltransferase, found in Mycoplasmopsis pulmonis (strain UAB CTIP) (Mycoplasma pulmonis).